Consider the following 658-residue polypeptide: Glycogen debranching enzyme (658 aa).

The Nucleophile role is filled by Asp336. The active-site Proton donor is Glu371. The disordered stretch occupies residues 459-484 (EANGEENRDGTNSNYSDNHGKEGLGG).

It belongs to the glycosyl hydrolase 13 family.

It carries out the reaction Hydrolysis of (1-&gt;6)-alpha-D-glucosidic linkages to branches with degrees of polymerization of three or four glucose residues in limit dextrin.. The protein operates within glycan degradation; glycogen degradation. Removes maltotriose and maltotetraose chains that are attached by 1,6-alpha-linkage to the limit dextrin main chain, generating a debranched limit dextrin. The protein is Glycogen debranching enzyme of Salmonella dublin (strain CT_02021853).